The following is an 80-amino-acid chain: Conotoxin ArMKLT2-0321 (80 aa).

Positions 1 to 21 are cleaved as a signal peptide; sequence MKLTCVLIIAMLFLIVCQLNT. A propeptide spanning residues 22-48 is cleaved from the precursor; sequence ADDSTDKQEYRAVKLRDAMRNFKGSKR. Cystine bridges form between Cys-50/Cys-63, Cys-57/Cys-68, and Cys-62/Cys-77.

This sequence belongs to the conotoxin O1 superfamily. In terms of tissue distribution, expressed by the venom duct.

The protein resides in the secreted. The protein is Conotoxin ArMKLT2-0321 of Conus arenatus (Sand-dusted cone).